The sequence spans 173 residues: NAD(P)H-quinone oxidoreductase subunit J (173 aa).

It belongs to the complex I 30 kDa subunit family. In terms of assembly, NDH-1 can be composed of about 15 different subunits; different subcomplexes with different compositions have been identified which probably have different functions.

It is found in the cellular thylakoid membrane. The catalysed reaction is a plastoquinone + NADH + (n+1) H(+)(in) = a plastoquinol + NAD(+) + n H(+)(out). It carries out the reaction a plastoquinone + NADPH + (n+1) H(+)(in) = a plastoquinol + NADP(+) + n H(+)(out). Its function is as follows. NDH-1 shuttles electrons from an unknown electron donor, via FMN and iron-sulfur (Fe-S) centers, to quinones in the respiratory and/or the photosynthetic chain. The immediate electron acceptor for the enzyme in this species is believed to be plastoquinone. Couples the redox reaction to proton translocation, and thus conserves the redox energy in a proton gradient. Cyanobacterial NDH-1 also plays a role in inorganic carbon-concentration. The polypeptide is NAD(P)H-quinone oxidoreductase subunit J (Prochlorococcus marinus (strain NATL1A)).